We begin with the raw amino-acid sequence, 1122 residues long: RecBCD enzyme subunit RecC (1122 aa).

The protein belongs to the RecC family. Heterotrimer of RecB, RecC and RecD. All subunits contribute to DNA-binding. Interacts with YgbT (Cas1). In terms of assembly, (Microbial infection) Lambda virus GamS protein interacts with the enzyme without displacing any of the subunits.

Its activity is regulated as follows. After reacting with DNA bearing a Chi site the holoenzyme is disassembled and loses exonuclease activity, DNA unwinding and Chi-directed DNA cleavage; RecB remains complexed with ssDNA, which may prevent holoenzyme reassembly. High levels of Mg(2+) (13 mM MgCl(2+)) or incubation with DNase allow holoenzyme reassembly, suggesting it is DNA bound to RecB that prevents reassembly. With respect to regulation, (Microbial infection) RecBCD is inhibited by the lambda virus gam protein (both GamL and GamS isoforms); in vitro a short preincubation prior to adding DNA results in maximal inhibition. In terms of biological role, a helicase/nuclease that prepares dsDNA breaks (DSB) for recombinational DNA repair. Binds to DSBs and unwinds DNA via a rapid (&gt;1 kb/second) and highly processive (&gt;30 kb) ATP-dependent bidirectional helicase. Unwinds dsDNA until it encounters a Chi (crossover hotspot instigator, 5'-GCTGGTGG-3') sequence from the 3' direction. Cuts ssDNA a few nucleotides 3' to Chi site, by nicking one strand or switching the strand degraded (depending on the reaction conditions). The properties and activities of the enzyme are changed at Chi. The Chi-altered holoenzyme produces a long 3'-ssDNA overhang which facilitates RecA-binding to the ssDNA for homologous DNA recombination and repair. Holoenzyme degrades any linearized DNA that is unable to undergo homologous recombination. In the holoenzyme this subunit almost certainly recognizes the wild-type Chi sequence, when added to isolated RecB increases its ATP-dependent helicase processivity. The RecBC complex requires the RecD subunit for nuclease activity, but can translocate along ssDNA in both directions. The RecBCD complex does not unwind G-quadruplex DNA. The polypeptide is RecBCD enzyme subunit RecC (Escherichia coli (strain K12)).